Here is a 312-residue protein sequence, read N- to C-terminus: Mevalonate kinase (312 aa).

104–114 (PISCGLGSSAS) is a binding site for ATP. D155 acts as the Proton acceptor in catalysis.

The protein belongs to the GHMP kinase family. Mevalonate kinase subfamily. In terms of assembly, homodimer. The cofactor is Mg(2+).

Its subcellular location is the cytoplasm. It carries out the reaction (R)-mevalonate + ATP = (R)-5-phosphomevalonate + ADP + H(+). Its pathway is isoprenoid biosynthesis; isopentenyl diphosphate biosynthesis via mevalonate pathway; isopentenyl diphosphate from (R)-mevalonate: step 1/3. Farnesyl- and geranyl-pyrophosphates are competitive inhibitors. Slightly inhibited by high concentration of ATP. In terms of biological role, catalyzes the phosphorylation of (R)-mevalonate (MVA) to (R)-mevalonate 5-phosphate (MVAP). Functions in the mevalonate (MVA) pathway leading to isopentenyl diphosphate (IPP), a key precursor for the biosynthesis of isoprenoid compounds such as archaeal membrane lipids. In Methanocaldococcus jannaschii (strain ATCC 43067 / DSM 2661 / JAL-1 / JCM 10045 / NBRC 100440) (Methanococcus jannaschii), this protein is Mevalonate kinase.